The sequence spans 313 residues: Ribosomal RNA small subunit methyltransferase H (313 aa).

S-adenosyl-L-methionine-binding positions include 35-37 (GGH), aspartate 55, phenylalanine 79, aspartate 101, and glutamine 108.

It belongs to the methyltransferase superfamily. RsmH family.

It is found in the cytoplasm. It catalyses the reaction cytidine(1402) in 16S rRNA + S-adenosyl-L-methionine = N(4)-methylcytidine(1402) in 16S rRNA + S-adenosyl-L-homocysteine + H(+). Specifically methylates the N4 position of cytidine in position 1402 (C1402) of 16S rRNA. The polypeptide is Ribosomal RNA small subunit methyltransferase H (Shigella sonnei (strain Ss046)).